The primary structure comprises 396 residues: Na(+)/H(+) antiporter NhaA 1 (396 aa).

A run of 11 helical transmembrane segments spans residues 18 to 38 (LLLI…LSWL), 60 to 80 (LLLW…GLEV), 95 to 115 (IALP…IYTG), 126 to 146 (GWAI…ALLG), 155 to 175 (LFLL…IALF), 178 to 198 (ADLS…LFIL), 201 to 221 (TGVT…ICVL), 262 to 282 (VAYG…LAGI), 295 to 315 (IAAG…WIGV), 333 to 353 (GMAV…TLAL), and 362 to 382 (AARL…YYLL).

This sequence belongs to the NhaA Na(+)/H(+) (TC 2.A.33) antiporter family.

The protein resides in the cell inner membrane. The enzyme catalyses Na(+)(in) + 2 H(+)(out) = Na(+)(out) + 2 H(+)(in). Na(+)/H(+) antiporter that extrudes sodium in exchange for external protons. The protein is Na(+)/H(+) antiporter NhaA 1 of Syntrophotalea carbinolica (strain DSM 2380 / NBRC 103641 / GraBd1) (Pelobacter carbinolicus).